The primary structure comprises 485 residues: N-succinylglutamate 5-semialdehyde dehydrogenase (485 aa).

NAD(+) is bound at residue 220 to 225; that stretch reads GSANTG. Residues E243 and C278 contribute to the active site.

This sequence belongs to the aldehyde dehydrogenase family. AstD subfamily.

The catalysed reaction is N-succinyl-L-glutamate 5-semialdehyde + NAD(+) + H2O = N-succinyl-L-glutamate + NADH + 2 H(+). It functions in the pathway amino-acid degradation; L-arginine degradation via AST pathway; L-glutamate and succinate from L-arginine: step 4/5. Functionally, catalyzes the NAD-dependent reduction of succinylglutamate semialdehyde into succinylglutamate. This Aliivibrio fischeri (strain ATCC 700601 / ES114) (Vibrio fischeri) protein is N-succinylglutamate 5-semialdehyde dehydrogenase.